Reading from the N-terminus, the 265-residue chain is 3-methyl-2-oxobutanoate hydroxymethyltransferase (265 aa).

Mg(2+) is bound by residues Asp-45 and Asp-84. 3-methyl-2-oxobutanoate is bound by residues 45–46, Asp-84, and Lys-112; that span reads DS. Glu-114 is a Mg(2+) binding site. The active-site Proton acceptor is the Glu-181.

This sequence belongs to the PanB family. Homodecamer; pentamer of dimers. It depends on Mg(2+) as a cofactor.

It is found in the cytoplasm. The catalysed reaction is 3-methyl-2-oxobutanoate + (6R)-5,10-methylene-5,6,7,8-tetrahydrofolate + H2O = 2-dehydropantoate + (6S)-5,6,7,8-tetrahydrofolate. It participates in cofactor biosynthesis; (R)-pantothenate biosynthesis; (R)-pantoate from 3-methyl-2-oxobutanoate: step 1/2. Its function is as follows. Catalyzes the reversible reaction in which hydroxymethyl group from 5,10-methylenetetrahydrofolate is transferred onto alpha-ketoisovalerate to form ketopantoate. The polypeptide is 3-methyl-2-oxobutanoate hydroxymethyltransferase (Wigglesworthia glossinidia brevipalpis).